Consider the following 475-residue polypeptide: Ribulose bisphosphate carboxylase large chain (475 aa).

The propeptide occupies 1-2; the sequence is MS. An N-acetylproline modification is found at P3. K14 carries the N6,N6,N6-trimethyllysine modification. 2 residues coordinate substrate: N123 and T173. The Proton acceptor role is filled by K175. Residue K177 participates in substrate binding. K201, D203, and E204 together coordinate Mg(2+). K201 is modified (N6-carboxylysine). The active-site Proton acceptor is H294. Residues R295, H327, and S379 each coordinate substrate.

This sequence belongs to the RuBisCO large chain family. Type I subfamily. Heterohexadecamer of 8 large chains and 8 small chains; disulfide-linked. The disulfide link is formed within the large subunit homodimers. Requires Mg(2+) as cofactor. The disulfide bond which can form in the large chain dimeric partners within the hexadecamer appears to be associated with oxidative stress and protein turnover.

The protein localises to the plastid. It localises to the chloroplast. The enzyme catalyses 2 (2R)-3-phosphoglycerate + 2 H(+) = D-ribulose 1,5-bisphosphate + CO2 + H2O. It catalyses the reaction D-ribulose 1,5-bisphosphate + O2 = 2-phosphoglycolate + (2R)-3-phosphoglycerate + 2 H(+). RuBisCO catalyzes two reactions: the carboxylation of D-ribulose 1,5-bisphosphate, the primary event in carbon dioxide fixation, as well as the oxidative fragmentation of the pentose substrate in the photorespiration process. Both reactions occur simultaneously and in competition at the same active site. In Chlorokybus atmophyticus (Soil alga), this protein is Ribulose bisphosphate carboxylase large chain.